The sequence spans 2472 residues: Centrosomal protein of 290 kDa (2472 aa).

Residues 1–689 are self-association (with itself or C-terminus); sequence MPPNIKWKEL…MESKNAEGIF (689 aa). 3 coiled-coil regions span residues 59-747, 1129-1392, and 1459-1492; these read MKMK…LRQS, RQRI…QQSK, and QVIL…ILSR. A disordered region spans residues 128-164; it reads DRELEDMEKELDKEKKVNEQLALRNEEAENENSKLRR. Residues 137–164 are compositionally biased toward basic and acidic residues; sequence ELDKEKKVNEQLALRNEEAENENSKLRR. The tract at residues 690–890 is interaction with IQCB1; that stretch reads DASLHLKAQV…TVLQVNEKSL (201 aa). 2 disordered regions span residues 1691–1713 and 2451–2472; these read AHKD…SRAP and PSPL…FPIY. Over residues 1697–1713 the composition is skewed to polar residues; the sequence is SLKSELQAQKEANSRAP. A self-association (with itself or N-terminus) region spans residues 1960–2472; it reads TTGMTVDQVL…GESPHSFPIY (513 aa).

Part of the tectonic-like complex (also named B9 complex). Interacts with ATF4 via its N-terminal region. Associates with the BBSome complex, interacting (via N-terminus) with BBS4. Interacts with IQCB1/NPHP5; IQCB1 and CEP290/NPHP6 are proposed to form a functional NPHP5-6 module localized to the centrosome. Interacts with NPHP4; the interaction likely requires additional interactors. Interacts with ZNF423, FAM161A, CEP162, CEP162, CEP131, TALPID3, CCDC13, CC2D2A, RPGRIP1. Can self-associate (homo- or heteromeric). Interacts with CCP110; required for suppressing cilia formation. Interacts with RPGR. Associates (via C-terminus) with microtubules; association to microtubule is reduced in response to cellular stress, such as ultraviolet light (UV) radiation or heat shock, in a process that requires p38 MAP kinase signaling. Interacts with FAM161A. Interacts with PCM1. Interacts with CCDC66. Interacts with ARMC9 and CSPP1. Post-translationally, ubiquitinated. May undergo monoubiquitination; monoubiquitination is inhibited in response to cellular stress, such as ultraviolet light (UV) radiation or heat shock, but does not cause its displacement from centriolar satellites. As to expression, expressed in multiple organs during early postnatal development, with highest levels in hindbrain.

It is found in the cytoplasm. The protein localises to the cytoskeleton. It localises to the microtubule organizing center. The protein resides in the centrosome. Its subcellular location is the centriolar satellite. It is found in the nucleus. The protein localises to the centriole. It localises to the cell projection. The protein resides in the cilium. Its subcellular location is the cilium basal body. It is found in the cytoplasmic vesicle. In terms of biological role, involved in early and late steps in cilia formation. Its association with CCP110 is required for inhibition of primary cilia formation by CCP110. May play a role in early ciliogenesis in the disappearance of centriolar satellites and in the transition of primary ciliar vesicles (PCVs) to capped ciliary vesicles (CCVs). Required for the centrosomal recruitment of RAB8A and for the targeting of centriole satellite proteins to centrosomes such as of PCM1. Required for the correct localization of ciliary and phototransduction proteins in retinal photoreceptor cells; may play a role in ciliary transport processes. Required for efficient recruitment of RAB8A to primary cilium. In the ciliary transition zone is part of the tectonic-like complex (also named B9 complex) which is required for tissue-specific ciliogenesis and may regulate ciliary membrane composition. Involved in regulation of the BBSome complex integrity, specifically for presence of BBS2, BBS5 and BBS8/TTC8 in the complex, and in ciliary targeting of selected BBSome cargos. May play a role in controlling entry of the BBSome complex to cilia possibly implicating IQCB1/NPHP5. Activates ATF4-mediated transcription. The sequence is that of Centrosomal protein of 290 kDa from Mus musculus (Mouse).